A 216-amino-acid polypeptide reads, in one-letter code: A-type ATP synthase subunit D (216 aa).

Belongs to the V-ATPase D subunit family. As to quaternary structure, has multiple subunits with at least A(3), B(3), C, D, E, F, H, I and proteolipid K(x). The N-terminus is blocked.

It localises to the cell membrane. In terms of biological role, component of the A-type ATP synthase that produces ATP from ADP in the presence of a proton gradient across the membrane. The chain is A-type ATP synthase subunit D from Sulfurisphaera tokodaii (strain DSM 16993 / JCM 10545 / NBRC 100140 / 7) (Sulfolobus tokodaii).